Reading from the N-terminus, the 251-residue chain is Pyrroloquinoline-quinone synthase (251 aa).

This sequence belongs to the PqqC family.

The catalysed reaction is 6-(2-amino-2-carboxyethyl)-7,8-dioxo-1,2,3,4,7,8-hexahydroquinoline-2,4-dicarboxylate + 3 O2 = pyrroloquinoline quinone + 2 H2O2 + 2 H2O + H(+). The protein operates within cofactor biosynthesis; pyrroloquinoline quinone biosynthesis. Its function is as follows. Ring cyclization and eight-electron oxidation of 3a-(2-amino-2-carboxyethyl)-4,5-dioxo-4,5,6,7,8,9-hexahydroquinoline-7,9-dicarboxylic-acid to PQQ. This Pseudomonas entomophila (strain L48) protein is Pyrroloquinoline-quinone synthase.